Consider the following 367-residue polypeptide: MINVGLLFGSKSVEHEISIITAHQVLSFVDKNKYNIIPIYITKDGKWLTGKILEDLENFKNLERLEKKSKQISSISAKDGKLILHSNIKKITIDVCLLTFHGSNGEDGSIQGMLEFLNVPYTGCGMYSSMYTMDKVITKLILKEKNIPVVDFLYTNKKNYTNDFLNHCKEVLEYPMIVKPARLGSSIGVKKVNDKCELEEAIETAFSFDDKVIVEKWIDSRELNCAVMGYKNIVVSEIEEIKKQKDFFDYNEKYVQKGKKFSNHIIPAPIDENLKNTIKSIARDTFNALECHGNIRIDFLLSKDNKIYVNEVNSIPGALSYYLWQMSGFTFSQVIDNMISIAFEAFKDKKSKIYSIDTNLFDLKVEK.

The ATP-grasp domain occupies 139–340; it reads KLILKEKNIP…FSQVIDNMIS (202 aa). 169 to 224 contacts ATP; sequence KEVLEYPMIVKPARLGSSIGVKKVNDKCELEEAIETAFSFDDKVIVEKWIDSRELN. The Mg(2+) site is built by D298, E311, and N313.

The protein belongs to the D-alanine--D-alanine ligase family. Requires Mg(2+) as cofactor. Mn(2+) is required as a cofactor.

It is found in the cytoplasm. It carries out the reaction 2 D-alanine + ATP = D-alanyl-D-alanine + ADP + phosphate + H(+). It participates in cell wall biogenesis; peptidoglycan biosynthesis. Cell wall formation. The chain is D-alanine--D-alanine ligase from Thermosipho africanus (strain TCF52B).